The following is a 194-amino-acid chain: uncharacterized protein (194 aa).

To A.rhizogenes plasmid pRia4B ORF-3 in virA region.

This is an uncharacterized protein from Sinorhizobium fredii (strain NBRC 101917 / NGR234).